The primary structure comprises 290 residues: Dehydrodolichyl diphosphate synthase CPT3 (290 aa).

D42 is an active-site residue.

This sequence belongs to the UPP synthase family. Mg(2+) serves as cofactor. As to expression, expressed in leaf trichomes and stem trichomes. Expressed at low levels in young leaves, stems and old leaves.

It is found in the cytoplasm. Its subcellular location is the cytosol. It carries out the reaction n isopentenyl diphosphate + (2E,6E)-farnesyl diphosphate = a di-trans,poly-cis-polyprenyl diphosphate + n diphosphate. Catalyzes cis-prenyl chain elongation to produce the polyprenyl backbone of dolichol, a glycosyl carrier-lipid required for the biosynthesis of several classes of glycoprotein. The chain is Dehydrodolichyl diphosphate synthase CPT3 from Solanum lycopersicum (Tomato).